A 184-amino-acid polypeptide reads, in one-letter code: NADH-quinone oxidoreductase subunit B (184 aa).

Residues cysteine 37, cysteine 38, cysteine 103, and cysteine 132 each coordinate [4Fe-4S] cluster.

Belongs to the complex I 20 kDa subunit family. As to quaternary structure, NDH-1 is composed of 14 different subunits. Subunits NuoB, C, D, E, F, and G constitute the peripheral sector of the complex. [4Fe-4S] cluster serves as cofactor.

It localises to the cell membrane. The catalysed reaction is a quinone + NADH + 5 H(+)(in) = a quinol + NAD(+) + 4 H(+)(out). Its function is as follows. NDH-1 shuttles electrons from NADH, via FMN and iron-sulfur (Fe-S) centers, to quinones in the respiratory chain. The immediate electron acceptor for the enzyme in this species is believed to be a menaquinone. Couples the redox reaction to proton translocation (for every two electrons transferred, four hydrogen ions are translocated across the cytoplasmic membrane), and thus conserves the redox energy in a proton gradient. In Mycolicibacterium gilvum (strain PYR-GCK) (Mycobacterium gilvum (strain PYR-GCK)), this protein is NADH-quinone oxidoreductase subunit B.